A 510-amino-acid chain; its full sequence is Inositol-3-phosphate synthase (510 aa).

Residues Gly70, Gly71, Asn72, Asn73, Asp143, Ile180, Gln190, Arg193, Thr230, Ala231, Asn232, Thr233, Gly281, Ser282, Asp306, Ser309, Asn340, Asn341, Asp342, Lys355, Gly393, Asp394, Asp422, and Ser423 each coordinate NAD(+).

Belongs to the myo-inositol 1-phosphate synthase family. NAD(+) is required as a cofactor.

The protein resides in the cytoplasm. The protein localises to the cytosol. It localises to the nucleus. The catalysed reaction is D-glucose 6-phosphate = 1D-myo-inositol 3-phosphate. Its pathway is polyol metabolism; myo-inositol biosynthesis; myo-inositol from D-glucose 6-phosphate: step 1/2. Functionally, key enzyme in myo-inositol biosynthesis pathway that catalyzes the conversion of glucose 6-phosphate to 1-myo-inositol 1-phosphate in a NAD-dependent manner. The chain is Inositol-3-phosphate synthase from Nicotiana tabacum (Common tobacco).